The chain runs to 260 residues: Thiazole synthase (260 aa).

Residue Lys-102 is the Schiff-base intermediate with DXP of the active site. Residues Gly-163, 189–190, and 211–212 each bind 1-deoxy-D-xylulose 5-phosphate; these read AG and NT.

This sequence belongs to the ThiG family. As to quaternary structure, homotetramer. Forms heterodimers with either ThiH or ThiS.

Its subcellular location is the cytoplasm. It carries out the reaction [ThiS sulfur-carrier protein]-C-terminal-Gly-aminoethanethioate + 2-iminoacetate + 1-deoxy-D-xylulose 5-phosphate = [ThiS sulfur-carrier protein]-C-terminal Gly-Gly + 2-[(2R,5Z)-2-carboxy-4-methylthiazol-5(2H)-ylidene]ethyl phosphate + 2 H2O + H(+). It functions in the pathway cofactor biosynthesis; thiamine diphosphate biosynthesis. Catalyzes the rearrangement of 1-deoxy-D-xylulose 5-phosphate (DXP) to produce the thiazole phosphate moiety of thiamine. Sulfur is provided by the thiocarboxylate moiety of the carrier protein ThiS. In vitro, sulfur can be provided by H(2)S. In Geobacter sp. (strain M21), this protein is Thiazole synthase.